The primary structure comprises 744 residues: Prestin (744 aa).

Over 1 to 75 the chain is Cytoplasmic; that stretch reads MDHAEENEIL…PITKWLPAYK (75 aa). Residues 76 to 105 traverse the membrane as a helical segment; sequence FKEYVLGDLVSGISTGVLQLPQGLAFAMLA. Residues 106–108 lie on the Extracellular side of the membrane; it reads AVP. A helical membrane pass occupies residues 109–126; that stretch reads PIFGLYSSFYPVIMYCFL. At 127-137 the chain is on the cytoplasmic side; sequence GTSRHISIGPF. Residues 138–151 traverse the membrane as a helical segment; sequence AVISLMIGGVAVRL. The Extracellular portion of the chain corresponds to 152-168; that stretch reads VPDDIVIPGGVNATNGT. The Involved in motor function signature appears at 158-168; it reads IPGGVNATNGT. Residues N163 and N166 are each glycosylated (N-linked (GlcNAc...) asparagine). Residues 169–196 form a helical membrane-spanning segment; sequence EARDALRVKVAMSVTLLSGIIQFCLGVC. The Cytoplasmic segment spans residues 197–206; the sequence is RFGFVAIYLT. Residues 207-230 form a helical membrane-spanning segment; it reads EPLVRGFTTAAAVHVFTSMLKYLF. Topologically, residues 231 to 241 are extracellular; sequence GVKTKRYSGIF. The helical intramembrane region spans 242 to 253; it reads SVVYSTVAVLQN. Residues 254–258 are Extracellular-facing; the sequence is VKNLN. The chain crosses the membrane as a helical span at residues 259–282; that stretch reads VCSLGVGLMVFGLLLGGKEFNERF. The Cytoplasmic segment spans residues 283–291; that stretch reads KEKLPAPIP. The chain crosses the membrane as a helical span at residues 292-307; the sequence is LEFFAVVMGTGISAGF. Residues 308–332 lie on the Extracellular side of the membrane; the sequence is NLKESYNVDVVGTLPLGLLPPANPD. Residues 333–367 traverse the membrane as a helical segment; it reads TSLFHLVYVDAIAIAIVGFSVTISMAKTLANKHGY. Residues 368–370 are Cytoplasmic-facing; that stretch reads QVD. The helical transmembrane segment at 371 to 388 threads the bilayer; that stretch reads GNQELIALGLCNSIGSLF. At 389–396 the chain is on the extracellular side; it reads QTFSISCS. The helical transmembrane segment at 397–406 threads the bilayer; that stretch reads LSRSLVQEGT. Position 398 (S398) interacts with salicylate. Residues 407-410 are Cytoplasmic-facing; the sequence is GGKT. Residues 411 to 432 traverse the membrane as a helical segment; it reads QLAGCLASLMILLVILATGFLF. Residues 433–436 are Extracellular-facing; it reads ESLP. Residues 437-464 traverse the membrane as a helical segment; sequence QAVLSAIVIVNLKGMFMQFSDLPFFWRT. A topological domain (cytoplasmic) is located at residue S465. A helical transmembrane segment spans residues 466–481; it reads KIELTIWLTTFVSSLF. Residues 482 to 483 are Extracellular-facing; that stretch reads LG. The helical transmembrane segment at 484–504 threads the bilayer; sequence LDYGLITAVIIALLTVIYRTQ. The tract at residues 505–718 is extended region for STAS domain; sequence SPSYKVLGKL…AVLGSQLREA (214 aa). The Cytoplasmic portion of the chain corresponds to 505-744; the sequence is SPSYKVLGKL…PNATPATPEA (240 aa). The STAS domain maps to 525-713; the sequence is AYEEVKEIPG…HSIHDAVLGS (189 aa). A disordered region spans residues 718-744; sequence ALAEQEASAPPSQEDLEPNATPATPEA.

This sequence belongs to the SLC26A/SulP transporter (TC 2.A.53) family. Homodimer. Interacts (via STAS domain) with CALM; this interaction is calcium-dependent and the STAS domain interacts with only one lobe of CALM which is an elongated conformation. Interacts with MYH1.

It is found in the lateral cell membrane. It carries out the reaction 2 hydrogencarbonate(in) + chloride(out) = 2 hydrogencarbonate(out) + chloride(in). Voltage-sensitive motor protein that drives outer hair cell (OHC) electromotility (eM) and participates in sound amplification in the hearing organ. Converts changes in the transmembrane electric potential into mechanical displacements resulting in the coupling of its expansion to movement of a charged voltage sensor across the lipid membrane. The nature of the voltage sensor is not completely clear, and two models compete. In the first model, acts as an incomplete transporter where intracellular chloride anion acts as extrinsic voltage sensor that drives conformational change in the protein which is sufficient to produce a length change in the plane of the membrane and hence in the length of the OHC. The second model in which multiple charged amino acid residues are distributed at the intracellular and extracellular membrane interfaces that form an intrinsic voltage sensor, whose movement produces the non-linear capacitance (NLC). However, the effective voltage sensor may be the result of a hybrid voltage sensor, assembled from intrinsic charge (charged residues) and extrinsic charge (bound anion). Notably, binding of anions to the anion-binding pocket partially neutralizes the intrinsic positive charge rather than to form an electrically negative sensor, therefore remaining charge may serve as voltage sensor that, after depolarization, moves from down (expanded state) to up (contracted) conformation, which is accompanied by an eccentric contraction of the intermembrane cross-sectional area of the protein as well as a major increase in the hydrophobic thickness of the protein having as consequences the plasma membrane thickening and the cell contraction after membrane depolarization. The anion-binding pocket transits from the inward-open (Down) state, where it is exposed toward the intracellular solvent in the absence of anion, to the occluded (Up) state upon anion binding. Salicylate competes for the anion-binding site and inhibits the voltage-sensor movement, and therefore inhibits the charge transfer and electromotility by displacing Cl(-) from the anion-binding site and by preventing the structural transitions to the contracted state. In addition, can act as a weak Cl(-)/HCO3(-) antiporter across the cell membrane and so regulate the intracellular pH of the outer hair cells (OHCs), while firstly found as being unable to mediate electrogenic anion transport. Moreover, supports a role in cardiac mechanical amplification serving as an elastic element to enhance the actomyosin- based sarcomere contraction system. This chain is Prestin, found in Homo sapiens (Human).